The following is a 211-amino-acid chain: MLTIALSKGRILDDTLPLLAEAGIVPTENPDKSRKLIIPTTQDDVRLLIVRATDVPTYVEHGAADLGVAGKDVLMEYGGQGLYEPLDLQIAQCKLMTAGVVGAAEPKGRLRVATKFVNVAKRYYAEQGRQVDIIKLYGSMELAPLINLADKIIDVVDTGNTLRANGLEPQELIATISSRLVVNKASMKMQHARIQSLIDTLRAAVESRHRG.

It belongs to the ATP phosphoribosyltransferase family. Short subfamily. As to quaternary structure, heteromultimer composed of HisG and HisZ subunits.

Its subcellular location is the cytoplasm. It carries out the reaction 1-(5-phospho-beta-D-ribosyl)-ATP + diphosphate = 5-phospho-alpha-D-ribose 1-diphosphate + ATP. The protein operates within amino-acid biosynthesis; L-histidine biosynthesis; L-histidine from 5-phospho-alpha-D-ribose 1-diphosphate: step 1/9. In terms of biological role, catalyzes the condensation of ATP and 5-phosphoribose 1-diphosphate to form N'-(5'-phosphoribosyl)-ATP (PR-ATP). Has a crucial role in the pathway because the rate of histidine biosynthesis seems to be controlled primarily by regulation of HisG enzymatic activity. This Pseudomonas putida (strain ATCC 47054 / DSM 6125 / CFBP 8728 / NCIMB 11950 / KT2440) protein is ATP phosphoribosyltransferase.